The sequence spans 429 residues: Inner membrane transport protein RhmT (429 aa).

Over 1 to 16 the chain is Cytoplasmic; that stretch reads MSTALLDAVVKKNRVR. A helical transmembrane segment spans residues 17–37; that stretch reads LIPFMLALYVLAFLDRSNIGF. Over 38-54 the chain is Periplasmic; sequence AKQTYQIDTGLSNEAYA. The chain crosses the membrane as a helical span at residues 55 to 75; that stretch reads LGAGIFFVVYAFLGVPANLLM. Over 76–81 the chain is Cytoplasmic; the sequence is RKLGAR. The chain crosses the membrane as a helical span at residues 82 to 102; it reads TWIGTTTLLWGFLSAAMAWAD. Over 103-143 the chain is Periplasmic; the sequence is TEAKFLIVRTLLRAAEAGFFPGMIYLTSQWFPQRNRASIMG. Residues 144 to 164 traverse the membrane as a helical segment; that stretch reads LFYMGAPLALTLGSPLSGALL. Residues 165 to 174 are Cytoplasmic-facing; it reads EMHGFMGHPG. A helical transmembrane segment spans residues 175–195; sequence WFWMFVIEGLLAVGAGVFTFF. Over 196–242 the chain is Periplasmic; the sequence is WLDDTPEQARFLSKQEKTLLINQLASEEQQKVTSRLSDALRNGRVWQ. The chain crosses the membrane as a helical span at residues 243 to 263; sequence LAIIYLTIQVAVYGLIFFLPT. Over 264 to 274 the chain is Cytoplasmic; the sequence is QVAALLGTKVG. Residues 275–295 traverse the membrane as a helical segment; that stretch reads FTASVVTAIPWVAALFGTWLI. Over 296-324 the chain is Periplasmic; the sequence is PRYSDKTGERRNVAALTLLAAGIGIGLSG. A helical membrane pass occupies residues 325–345; it reads LLSPVMAIVALCVAAIGFIAV. Residues 346–361 are Cytoplasmic-facing; the sequence is QPVFWTMPTQLLSGTA. The chain crosses the membrane as a helical span at residues 362–382; sequence LAAGIGFVNLFGAVGGFIAPI. Residues 383–394 lie on the Periplasmic side of the membrane; sequence LRVKAETLFASD. The chain crosses the membrane as a helical span at residues 395 to 415; it reads AAGLLTLAAVAVIGSLIIFTL. The Cytoplasmic portion of the chain corresponds to 416–429; sequence RVNRTVAQTDVAHH.

Belongs to the major facilitator superfamily. Phthalate permease family.

The protein localises to the cell inner membrane. The protein is Inner membrane transport protein RhmT (rhmT) of Escherichia coli (strain K12).